The sequence spans 551 residues: Cytochrome c oxidase subunit 1 (551 aa).

A helical transmembrane segment spans residues 34 to 54; that stretch reads TLYLYSGVWGGLFGASLSLMI. A Ca(2+)-binding site is contributed by Gly62. His79 serves as a coordination point for Fe(II)-heme a. The next 6 helical transmembrane spans lie at 81 to 101, 126 to 146, 163 to 183, 209 to 229, 252 to 272, and 285 to 305; these read LMMI…NWLI, ALYL…GWTI, VLIV…INFA, TAVL…MILF, LFWF…FGVM, and VFGL…GCMV. Residue His258 participates in Cu cation binding. Residues 258–262 constitute a cross-link (1'-histidyl-3'-tyrosine (His-Tyr)); the sequence is HPEVY. Tyr262 is a binding site for O2. 2 residues coordinate Cu cation: His308 and His309. Helical transmembrane passes span 326 to 346 and 356 to 376; these read ATMV…ATMA and AYWS…GVLL. Mg(2+)-binding residues include His386 and Asp387. 3 consecutive transmembrane segments (helical) span residues 391–411, 432–452, and 475–495; these read VVAH…FCGL, FMAM…LGLS, and GSAV…EALV. His394 serves as a coordination point for heme a3. Position 396 (His396) interacts with Fe(II)-heme a.

Belongs to the heme-copper respiratory oxidase family. Component of the cytochrome c oxidase (complex IV, CIV), a multisubunit enzyme composed of a catalytic core of 3 subunits and several supernumerary subunits. The complex exists as a monomer or a dimer and forms supercomplexes (SCs) in the inner mitochondrial membrane with ubiquinol-cytochrome c oxidoreductase (cytochrome b-c1 complex, complex III, CIII). Heme is required as a cofactor. Cu cation serves as cofactor.

The protein resides in the mitochondrion inner membrane. It catalyses the reaction 4 Fe(II)-[cytochrome c] + O2 + 8 H(+)(in) = 4 Fe(III)-[cytochrome c] + 2 H2O + 4 H(+)(out). Its pathway is energy metabolism; oxidative phosphorylation. Its function is as follows. Component of the cytochrome c oxidase, the last enzyme in the mitochondrial electron transport chain which drives oxidative phosphorylation. The respiratory chain contains 3 multisubunit complexes succinate dehydrogenase (complex II, CII), ubiquinol-cytochrome c oxidoreductase (cytochrome b-c1 complex, complex III, CIII) and cytochrome c oxidase (complex IV, CIV), that cooperate to transfer electrons derived from NADH and succinate to molecular oxygen, creating an electrochemical gradient over the inner membrane that drives transmembrane transport and the ATP synthase. Cytochrome c oxidase is the component of the respiratory chain that catalyzes the reduction of oxygen to water. Electrons originating from reduced cytochrome c in the intermembrane space (IMS) are transferred via the dinuclear copper A center (CU(A)) of subunit 2 and heme A of subunit 1 to the active site in subunit 1, a binuclear center (BNC) formed by heme A3 and copper B (CU(B)). The BNC reduces molecular oxygen to 2 water molecules using 4 electrons from cytochrome c in the IMS and 4 protons from the mitochondrial matrix. In Mytilus edulis (Blue mussel), this protein is Cytochrome c oxidase subunit 1 (COI).